A 424-amino-acid chain; its full sequence is GDP-fucose protein O-fucosyltransferase 2 (424 aa).

The first 20 residues, Met1–Ala20, serve as a signal peptide directing secretion. Position 51–55 (Gly51–Asn55) interacts with GDP-beta-L-fucose. The Proton acceptor role is filled by Glu52. A disulfide bridge links Cys154 with Cys187. An N-linked (GlcNAc...) asparagine glycan is attached at Asn205. Residues His288–Arg290, Asp366, and Thr383–Phe384 each bind GDP-beta-L-fucose. A disulfide bridge links Cys407 with Cys414.

This sequence belongs to the glycosyltransferase 68 family. Expressed in the anterior part of embryos, in the hypodermal and neuronal cells of the head. Expressed at different levels in a variety of cell types after hatching, including neuronal, hypodermal, muscle, intestinal, and somatic gonadal cells. Expressed in the nerve ring around the pharynx, in dorsal and ventral nerve cords, intestine, and a variety of hypodermal cells of L1-L3 larvae. Expressed in gonadal sheath cells, spermatheca, and tissues surrounding the vulva of adult hermaphrodites, and in the body wall muscle and hypodermal cells of adults of both sexes.

The protein resides in the endoplasmic reticulum. It localises to the golgi apparatus. The catalysed reaction is L-seryl-[protein] + GDP-beta-L-fucose = 3-O-(alpha-L-fucosyl)-L-seryl-[protein] + GDP + H(+). It carries out the reaction L-threonyl-[protein] + GDP-beta-L-fucose = 3-O-(alpha-L-fucosyl)-L-threonyl-[protein] + GDP + H(+). It functions in the pathway protein modification; protein glycosylation. Catalyzes the reaction that attaches fucose through an O-glycosidic linkage to a conserved serine or threonine residue in the consensus sequence C1-X-X-S/T-C2 of thrombospondin type I repeats (TSRs) where C1 and C2 are the first and second cysteines of the repeat, respectively. O-fucosylates members of several protein families including the ADAMTS superfamily and the thrombospondin (TSP) and spondin families. The sequence is that of GDP-fucose protein O-fucosyltransferase 2 (pad-2) from Caenorhabditis elegans.